Consider the following 413-residue polypeptide: 2,3-bisphosphoglycerate-independent phosphoglycerate mutase (413 aa).

It belongs to the BPG-independent phosphoglycerate mutase family. A-PGAM subfamily.

It catalyses the reaction (2R)-2-phosphoglycerate = (2R)-3-phosphoglycerate. It participates in carbohydrate degradation; glycolysis; pyruvate from D-glyceraldehyde 3-phosphate: step 3/5. Its function is as follows. Catalyzes the interconversion of 2-phosphoglycerate and 3-phosphoglycerate. This chain is 2,3-bisphosphoglycerate-independent phosphoglycerate mutase, found in Sulfolobus acidocaldarius (strain ATCC 33909 / DSM 639 / JCM 8929 / NBRC 15157 / NCIMB 11770).